The primary structure comprises 160 residues: Transcriptional regulator MraZ (160 aa).

2 SpoVT-AbrB domains span residues 5 to 50 (NFET…DGGY) and 93 to 136 (AVEC…SQAE).

The protein belongs to the MraZ family. Forms oligomers.

The protein resides in the cytoplasm. The protein localises to the nucleoid. This chain is Transcriptional regulator MraZ, found in Geotalea daltonii (strain DSM 22248 / JCM 15807 / FRC-32) (Geobacter daltonii).